Reading from the N-terminus, the 274-residue chain is Dermonecrotic toxin LspiSicTox-betaIII2 (274 aa).

Residue His-5 is part of the active site. Positions 25 and 27 each coordinate Mg(2+). His-41 functions as the Nucleophile in the catalytic mechanism. Cystine bridges form between Cys-45-Cys-51 and Cys-47-Cys-189. Asp-85 lines the Mg(2+) pocket.

It belongs to the arthropod phospholipase D family. Class II subfamily. Mg(2+) is required as a cofactor. In terms of tissue distribution, expressed by the venom gland.

The protein localises to the secreted. It carries out the reaction an N-(acyl)-sphingosylphosphocholine = an N-(acyl)-sphingosyl-1,3-cyclic phosphate + choline. The enzyme catalyses an N-(acyl)-sphingosylphosphoethanolamine = an N-(acyl)-sphingosyl-1,3-cyclic phosphate + ethanolamine. The catalysed reaction is a 1-acyl-sn-glycero-3-phosphocholine = a 1-acyl-sn-glycero-2,3-cyclic phosphate + choline. It catalyses the reaction a 1-acyl-sn-glycero-3-phosphoethanolamine = a 1-acyl-sn-glycero-2,3-cyclic phosphate + ethanolamine. Functionally, dermonecrotic toxins cleave the phosphodiester linkage between the phosphate and headgroup of certain phospholipids (sphingolipid and lysolipid substrates), forming an alcohol (often choline) and a cyclic phosphate. This toxin acts on sphingomyelin (SM). It may also act on ceramide phosphoethanolamine (CPE), lysophosphatidylcholine (LPC) and lysophosphatidylethanolamine (LPE), but not on lysophosphatidylserine (LPS), and lysophosphatidylglycerol (LPG). It acts by transphosphatidylation, releasing exclusively cyclic phosphate products as second products. Induces dermonecrosis, hemolysis, increased vascular permeability, edema, inflammatory response, and platelet aggregation. The protein is Dermonecrotic toxin LspiSicTox-betaIII2 of Loxosceles spinulosa (Recluse spider).